We begin with the raw amino-acid sequence, 289 residues long: Pantothenate synthetase (289 aa).

30-37 (MGYLHEGH) is a binding site for ATP. H37 serves as the catalytic Proton donor. Residue Q61 coordinates (R)-pantoate. Q61 provides a ligand contact to beta-alanine. Residue 147–150 (GLKD) coordinates ATP. Residue Q153 participates in (R)-pantoate binding. Residues V176 and 184-187 (KSSR) each bind ATP.

Belongs to the pantothenate synthetase family. In terms of assembly, homodimer.

The protein localises to the cytoplasm. It catalyses the reaction (R)-pantoate + beta-alanine + ATP = (R)-pantothenate + AMP + diphosphate + H(+). It functions in the pathway cofactor biosynthesis; (R)-pantothenate biosynthesis; (R)-pantothenate from (R)-pantoate and beta-alanine: step 1/1. Functionally, catalyzes the condensation of pantoate with beta-alanine in an ATP-dependent reaction via a pantoyl-adenylate intermediate. This Geobacillus thermodenitrificans (strain NG80-2) protein is Pantothenate synthetase.